A 271-amino-acid polypeptide reads, in one-letter code: Nuclear egress protein 2 (271 aa).

At 1–249 (MSVVGKRVVD…LGRAVALVRR (249 aa)) the chain is on the perinuclear space side. A helical membrane pass occupies residues 250-267 (SWPWISAGIAFLCLGLVW). At 268–271 (MRPS) the chain is on the nuclear side.

Belongs to the herpesviridae NEC2 protein family. Forms a heterohexameric complex with NEC1. In terms of processing, phosphorylated.

The protein localises to the host nucleus inner membrane. Its function is as follows. Plays an essential role in virion nuclear egress, the first step of virion release from infected cell. Within the host nucleus, NEC1 interacts with the newly formed capsid through the vertexes and directs it to the inner nuclear membrane by associating with NEC2. Induces the budding of the capsid at the inner nuclear membrane as well as its envelopment into the perinuclear space. There, the NEC1/NEC2 complex promotes the fusion of the enveloped capsid with the outer nuclear membrane and the subsequent release of the viral capsid into the cytoplasm where it will reach the secondary budding sites in the host Golgi or trans-Golgi network. This is Nuclear egress protein 2 from Homo sapiens (Human).